Reading from the N-terminus, the 562-residue chain is Phosphoglucomutase-1 (562 aa).

An N-acetylmethionine modification is found at Met-1. The residue at position 16 (Lys-16) is an N6-acetyllysine. Arg-23 contributes to the alpha-D-glucose 1,6-bisphosphate binding site. Thr-115 bears the Phosphothreonine mark. Alpha-D-glucose 1,6-bisphosphate is bound at residue Ser-117. The active-site Phosphoserine intermediate is the Ser-117. Position 117 (Ser-117) interacts with Mg(2+). Ser-117 and Ser-134 each carry phosphoserine. Thr-185 bears the Phosphothreonine mark. Ser-213 carries the post-translational modification Phosphoserine. Asp-288, Asp-290, and Asp-292 together coordinate Mg(2+). Alpha-D-glucose 1,6-bisphosphate contacts are provided by Asp-292 and Arg-293. An N6-acetyllysine modification is found at Lys-349. At Tyr-353 the chain carries Phosphotyrosine. Position 357 (Thr-357) interacts with alpha-D-glucose 1,6-bisphosphate. Residue Ser-369 is modified to Phosphoserine. Residues Glu-376, Ser-378, and Lys-389 each coordinate alpha-D-glucose 1,6-bisphosphate. Ser-378 is subject to Phosphoserine. At Lys-419 the chain carries N6-succinyllysine. Residue Thr-467 is modified to Phosphothreonine; by PAK1. Residues Ser-477, Ser-485, and Ser-505 each carry the phosphoserine modification. A Phosphothreonine modification is found at Thr-507. Ser-509 and Ser-541 each carry phosphoserine.

It belongs to the phosphohexose mutase family. As to quaternary structure, monomer. Requires Mg(2+) as cofactor. Phosphorylation at Thr-467 by PAK1 significantly enhances enzymatic activity.

It localises to the cytoplasm. The enzyme catalyses alpha-D-glucose 1-phosphate = alpha-D-glucose 6-phosphate. It carries out the reaction O-phospho-L-seryl-[protein] + alpha-D-glucose 1-phosphate = alpha-D-glucose 1,6-bisphosphate + L-seryl-[protein]. The catalysed reaction is alpha-D-glucose 1,6-bisphosphate + L-seryl-[protein] = O-phospho-L-seryl-[protein] + alpha-D-glucose 6-phosphate. Its function is as follows. Catalyzes the reversible isomerization of alpha-D-glucose 1-phosphate to alpha-D-glucose 6-phosphate. The mechanism proceeds via the intermediate compound alpha-D-glucose 1,6-bisphosphate. This enzyme participates in both the breakdown and synthesis of glucose. The chain is Phosphoglucomutase-1 (PGM1) from Bos taurus (Bovine).